Here is a 760-residue protein sequence, read N- to C-terminus: Forkhead box protein M1 (760 aa).

2 disordered regions span residues 1–54 (MRTS…AESS) and 95–167 (GKES…SYAG). Low complexity-rich tracts occupy residues 43–54 (PAQASQEVAESS) and 110–124 (SSGG…PQAH). Basic and acidic residues predominate over residues 125–134 (SSRDSKRAEV). Low complexity predominate over residues 140–149 (GPKPAAKGVP). Glycyl lysine isopeptide (Lys-Gly) (interchain with G-Cter in SUMO2) cross-links involve residues Lys-199 and Lys-323. The segment at residues 233 to 325 (ERPPYSYMAM…LTLDQVFKPL (93 aa)) is a DNA-binding region (fork-head). The segment at 323–348 (KPLEPGSPQSPEHLESQQKRPNPELH) is disordered. Ser-329 carries the phosphoserine modification. A compositionally biased stretch (basic and acidic residues) spans 334–348 (EHLESQQKRPNPELH). Lys-354 participates in a covalent cross-link: Glycyl lysine isopeptide (Lys-Gly) (interchain with G-Cter in SUMO2). Phosphoserine; by CHEK2 is present on Ser-374. Residues Lys-420 and Lys-438 each participate in a glycyl lysine isopeptide (Lys-Gly) (interchain with G-Cter in SUMO2) cross-link. 3 disordered regions span residues 500–560 (SWED…PDLF), 577–635 (ESSE…LDFS), and 660–709 (PLKS…IPSL). At Ser-521 the chain carries Phosphoserine. A compositionally biased stretch (basic and acidic residues) spans 531–542 (VTKRREKREVSR). Residues 604 to 613 (PVSSTPSKSV) show a composition bias toward polar residues. Phosphothreonine; by CDK1 is present on Thr-608. At Thr-624 the chain carries Phosphothreonine. A phosphoserine; by PLK1 mark is found at Ser-727 and Ser-736.

Phosphorylated in M (mitotic) phase. Phosphorylation by the checkpoint kinase CHEK2 in response to DNA damage increases the FOXM1 protein stability probably stimulating the transcription of genes involved in DNA repair. Phosphorylated by CDK1 in late S and G2 phases, creating docking sites for the POLO box domains of PLK1. Subsequently, PLK1 binds and phosphorylates FOXM1, leading to activation of transcriptional activity and subsequent enhanced expression of key mitotic regulators. Phosphorylated by GSK3B leading to ubiquitination and proteasomal degradation. As to expression, expressed in fetal heart, brain, liver, lung, kidney and limb, but only in adult thymus. Appears to be expressed only in adult organs containing proliferating/cycling cells or in response to growth factors.

It localises to the nucleus. Transcription factor regulating the expression of cell cycle genes essential for DNA replication and mitosis. Plays a role in the control of cell proliferation. Also plays a role in DNA break repair, participating in the DNA damage checkpoint response. Promotes transcription of PHB2. This is Forkhead box protein M1 (Foxm1) from Mus musculus (Mouse).